The following is a 254-amino-acid chain: 5'/3'-nucleotidase SurE (254 aa).

The a divalent metal cation site is built by Asp8, Asp9, Ser39, and Asn92.

Belongs to the SurE nucleotidase family. Requires a divalent metal cation as cofactor.

The protein localises to the cytoplasm. It catalyses the reaction a ribonucleoside 5'-phosphate + H2O = a ribonucleoside + phosphate. The enzyme catalyses a ribonucleoside 3'-phosphate + H2O = a ribonucleoside + phosphate. It carries out the reaction [phosphate](n) + H2O = [phosphate](n-1) + phosphate + H(+). Its function is as follows. Nucleotidase with a broad substrate specificity as it can dephosphorylate various ribo- and deoxyribonucleoside 5'-monophosphates and ribonucleoside 3'-monophosphates with highest affinity to 3'-AMP. Also hydrolyzes polyphosphate (exopolyphosphatase activity) with the preference for short-chain-length substrates (P20-25). Might be involved in the regulation of dNTP and NTP pools, and in the turnover of 3'-mononucleotides produced by numerous intracellular RNases (T1, T2, and F) during the degradation of various RNAs. The polypeptide is 5'/3'-nucleotidase SurE (Edwardsiella ictaluri (strain 93-146)).